Here is a 124-residue protein sequence, read N- to C-terminus: Small ribosomal subunit protein uS12 (124 aa).

Residues 1–27 (MPTINQLIRKPRKSQTEKTASPALQNC) are disordered. Residues 17 to 27 (EKTASPALQNC) show a composition bias toward polar residues. Asp-89 is subject to 3-methylthioaspartic acid.

The protein belongs to the universal ribosomal protein uS12 family. In terms of assembly, part of the 30S ribosomal subunit. Contacts proteins S8 and S17. May interact with IF1 in the 30S initiation complex.

Its function is as follows. With S4 and S5 plays an important role in translational accuracy. Interacts with and stabilizes bases of the 16S rRNA that are involved in tRNA selection in the A site and with the mRNA backbone. Located at the interface of the 30S and 50S subunits, it traverses the body of the 30S subunit contacting proteins on the other side and probably holding the rRNA structure together. The combined cluster of proteins S8, S12 and S17 appears to hold together the shoulder and platform of the 30S subunit. The polypeptide is Small ribosomal subunit protein uS12 (Borreliella afzelii (strain PKo) (Borrelia afzelii)).